A 109-amino-acid polypeptide reads, in one-letter code: MRVFFSLIIFSFMLATCQGACGIGPLVSSPTDAMAPKKCVDPNDRRKHLIVSTWNTADCLRCECDNDGLSCCHRYGGLAERAGCKSVLNQVTCEYEFYRLDDLSKRCDA.

The first 19 residues, 1–19, serve as a signal peptide directing secretion; sequence MRVFFSLIIFSFMLATCQG. Cystine bridges form between Cys-21/Cys-72, Cys-39/Cys-64, Cys-59/Cys-93, Cys-62/Cys-71, and Cys-84/Cys-107.

In terms of assembly, forms a stable, non-covalent complex with serotriflin.

The protein localises to the secreted. In terms of biological role, may serve as a self-defense protein against the toxic effects of the snake venom during accidental envenomation. Does not show inhibitory activity towards brevilysin H6. The sequence is that of Small serum protein 2 from Protobothrops flavoviridis (Habu).